Reading from the N-terminus, the 599-residue chain is Proteasome-associated ATPase (599 aa).

The interval 1 to 22 (MPHGHPGSQPDEGGELSNGSSS) is disordered. Positions 21–97 (SSGELTAQIR…LREEVDRLAQ (77 aa)) form a coiled coil. An ATP-binding site is contributed by 286-291 (GCGKTL). Residues 598–599 (YL) are docks into pockets in the proteasome alpha-ring.

It belongs to the AAA ATPase family. As to quaternary structure, homohexamer. Assembles into a hexameric ring structure that caps the 20S proteasome core. Strongly interacts with the prokaryotic ubiquitin-like protein Pup through a hydrophobic interface; the interacting region of ARC lies in its N-terminal coiled-coil domain. There is one Pup binding site per ARC hexamer ring. Upon ATP-binding, the C-terminus of ARC interacts with the alpha-rings of the proteasome core, possibly by binding to the intersubunit pockets.

It participates in protein degradation; proteasomal Pup-dependent pathway. Its function is as follows. ATPase which is responsible for recognizing, binding, unfolding and translocation of pupylated proteins into the bacterial 20S proteasome core particle. May be essential for opening the gate of the 20S proteasome via an interaction with its C-terminus, thereby allowing substrate entry and access to the site of proteolysis. Thus, the C-termini of the proteasomal ATPase may function like a 'key in a lock' to induce gate opening and therefore regulate proteolysis. The polypeptide is Proteasome-associated ATPase (Actinosynnema mirum (strain ATCC 29888 / DSM 43827 / JCM 3225 / NBRC 14064 / NCIMB 13271 / NRRL B-12336 / IMRU 3971 / 101)).